The following is a 454-amino-acid chain: Bifunctional protein GlmU (454 aa).

A pyrophosphorylase region spans residues 1–227; it reads MTQLSVVILA…FMEVEGANNR (227 aa). UDP-N-acetyl-alpha-D-glucosamine contacts are provided by residues 9–12, Lys23, Gln74, 79–80, 101–103, Gly138, Glu152, Asn167, and Asn225; these read LAAG, GT, and YGD. Mg(2+) is bound at residue Asp103. Asn225 contacts Mg(2+). The linker stretch occupies residues 228 to 248; that stretch reads LQLAALERFYQKTQAEKLLLA. The tract at residues 249 to 454 is N-acetyltransferase; it reads GVRLIDQARF…QGWQRPTKKK (206 aa). The UDP-N-acetyl-alpha-D-glucosamine site is built by Arg331 and Lys349. Catalysis depends on His361, which acts as the Proton acceptor. Tyr364 and Asn375 together coordinate UDP-N-acetyl-alpha-D-glucosamine. Acetyl-CoA is bound by residues Ala378, 384–385, Ser403, Ala421, and Arg438; that span reads NY.

In the N-terminal section; belongs to the N-acetylglucosamine-1-phosphate uridyltransferase family. This sequence in the C-terminal section; belongs to the transferase hexapeptide repeat family. Homotrimer. It depends on Mg(2+) as a cofactor.

It localises to the cytoplasm. It catalyses the reaction alpha-D-glucosamine 1-phosphate + acetyl-CoA = N-acetyl-alpha-D-glucosamine 1-phosphate + CoA + H(+). The catalysed reaction is N-acetyl-alpha-D-glucosamine 1-phosphate + UTP + H(+) = UDP-N-acetyl-alpha-D-glucosamine + diphosphate. Its pathway is nucleotide-sugar biosynthesis; UDP-N-acetyl-alpha-D-glucosamine biosynthesis; N-acetyl-alpha-D-glucosamine 1-phosphate from alpha-D-glucosamine 6-phosphate (route II): step 2/2. It functions in the pathway nucleotide-sugar biosynthesis; UDP-N-acetyl-alpha-D-glucosamine biosynthesis; UDP-N-acetyl-alpha-D-glucosamine from N-acetyl-alpha-D-glucosamine 1-phosphate: step 1/1. It participates in bacterial outer membrane biogenesis; LPS lipid A biosynthesis. Functionally, catalyzes the last two sequential reactions in the de novo biosynthetic pathway for UDP-N-acetylglucosamine (UDP-GlcNAc). The C-terminal domain catalyzes the transfer of acetyl group from acetyl coenzyme A to glucosamine-1-phosphate (GlcN-1-P) to produce N-acetylglucosamine-1-phosphate (GlcNAc-1-P), which is converted into UDP-GlcNAc by the transfer of uridine 5-monophosphate (from uridine 5-triphosphate), a reaction catalyzed by the N-terminal domain. The polypeptide is Bifunctional protein GlmU (Actinobacillus pleuropneumoniae serotype 7 (strain AP76)).